The following is a 313-amino-acid chain: Porphobilinogen deaminase (313 aa).

Cysteine 242 is modified (S-(dipyrrolylmethanemethyl)cysteine).

The protein belongs to the HMBS family. Monomer. Requires dipyrromethane as cofactor.

The catalysed reaction is 4 porphobilinogen + H2O = hydroxymethylbilane + 4 NH4(+). Its pathway is porphyrin-containing compound metabolism; protoporphyrin-IX biosynthesis; coproporphyrinogen-III from 5-aminolevulinate: step 2/4. In terms of biological role, tetrapolymerization of the monopyrrole PBG into the hydroxymethylbilane pre-uroporphyrinogen in several discrete steps. This chain is Porphobilinogen deaminase, found in Pseudomonas putida (strain W619).